The primary structure comprises 181 residues: uncharacterized protein (181 aa).

Residues 25-47 form a disordered region; that stretch reads ELANEVSAGDEEPYDDDIWESED. A compositionally biased stretch (acidic residues) spans 32 to 47; sequence AGDEEPYDDDIWESED. The helical transmembrane segment at 149–169 threads the bilayer; the sequence is ILTLILLSCGLLMLFIGYPIL.

The protein localises to the cytoplasm. Its subcellular location is the membrane. This is an uncharacterized protein from Schizosaccharomyces pombe (strain 972 / ATCC 24843) (Fission yeast).